Reading from the N-terminus, the 232-residue chain is Ribose-5-phosphate isomerase A (232 aa).

Residues 31-34 (TGST), 87-90 (DGAD), and 100-103 (KGGG) contribute to the substrate site. The active-site Proton acceptor is the E109. K127 serves as a coordination point for substrate.

It belongs to the ribose 5-phosphate isomerase family. In terms of assembly, homodimer.

It carries out the reaction aldehydo-D-ribose 5-phosphate = D-ribulose 5-phosphate. It participates in carbohydrate degradation; pentose phosphate pathway; D-ribose 5-phosphate from D-ribulose 5-phosphate (non-oxidative stage): step 1/1. Catalyzes the reversible conversion of ribose-5-phosphate to ribulose 5-phosphate. This is Ribose-5-phosphate isomerase A from Bifidobacterium longum (strain NCC 2705).